The following is a 212-amino-acid chain: ATP-dependent Clp protease proteolytic subunit (212 aa).

The active-site Nucleophile is serine 114. Histidine 139 is an active-site residue.

This sequence belongs to the peptidase S14 family. Fourteen ClpP subunits assemble into 2 heptameric rings which stack back to back to give a disk-like structure with a central cavity, resembling the structure of eukaryotic proteasomes.

Its subcellular location is the cytoplasm. The catalysed reaction is Hydrolysis of proteins to small peptides in the presence of ATP and magnesium. alpha-casein is the usual test substrate. In the absence of ATP, only oligopeptides shorter than five residues are hydrolyzed (such as succinyl-Leu-Tyr-|-NHMec, and Leu-Tyr-Leu-|-Tyr-Trp, in which cleavage of the -Tyr-|-Leu- and -Tyr-|-Trp bonds also occurs).. Functionally, cleaves peptides in various proteins in a process that requires ATP hydrolysis. Has a chymotrypsin-like activity. Plays a major role in the degradation of misfolded proteins. This chain is ATP-dependent Clp protease proteolytic subunit, found in Aromatoleum aromaticum (strain DSM 19018 / LMG 30748 / EbN1) (Azoarcus sp. (strain EbN1)).